The following is a 546-amino-acid chain: MSAKDVKFGVEARDRMLRGVDILANAVKVTLGPKGRNVVLDKSFGAPRITKDGVTVAKEIELDDKFENMGAQMVREVASKSADAAGDGTTTATVLAQAIVREGAKAVAAGMNPMDLKRGIDLAVEAVVADLVKNSKKVTSNDEIAQVGTISANGDSEIGKFLADAMKKVGNEGVITVEEAKSLETELDVVEGMQFDRGYISPYFVTNADKMRVEMDDAYILINEKKLSSLNELLPLLEAVVQTGKPLVIVAEDVEGEALATLVVNRLRGGLKVAAVKAPGFGDRRKAMLQDIAILTGGQAISEDLGIKLENVNLSMLGRAKKVMIDKENTTIVNGAGKKADIEARVAQIKAQIEETTSDYDREKLQERLAKLAGGVAVIRVGGATEVEVKERKDRVDDAMHATRAAVEEGILPGGGVALLRASEQLKGVRTKNEDQKTGVEIVRKALSAPARQIAINAGEDGSVIVGKILEKEQYAYGFDSQSGDYVNMVSKGIIDPTKVVRTAIQNAASVASLLITTEAMVAELPKKAAAGPAMPPGGGMGGMDF.

Residues 30–33, Lys-51, 87–91, Gly-415, and Asp-496 contribute to the ATP site; these read TLGP and DGTTT.

This sequence belongs to the chaperonin (HSP60) family. Forms a cylinder of 14 subunits composed of two heptameric rings stacked back-to-back. Interacts with the co-chaperonin GroES.

It localises to the cytoplasm. The enzyme catalyses ATP + H2O + a folded polypeptide = ADP + phosphate + an unfolded polypeptide.. Together with its co-chaperonin GroES, plays an essential role in assisting protein folding. The GroEL-GroES system forms a nano-cage that allows encapsulation of the non-native substrate proteins and provides a physical environment optimized to promote and accelerate protein folding. The chain is Chaperonin GroEL 2 from Bradyrhizobium sp. (strain ORS 278).